Reading from the N-terminus, the 156-residue chain is V-type proton ATPase 16 kDa proteolipid subunit c (156 aa).

Over 1–7 (MAENPIY) the chain is Lumenal. Residues 8–30 (GPFFGVMGAASAIIFSALGAAYG) form a helical membrane-spanning segment. Topologically, residues 31–52 (TAKSGTGIAAMSVMRPELIMKS) are cytoplasmic. The helical transmembrane segment at 53-73 (IIPVVMAGIIAIYGLVVAVLI) threads the bilayer. At 74-92 (AGSLDAPSNNYTLYKGFIH) the chain is on the lumenal side. A helical membrane pass occupies residues 93 to 114 (LGAGLAVGFSGLAAGFAIGIVG). Residues 115–126 (DAGVRGTAQQPR) are Cytoplasmic-facing. A helical membrane pass occupies residues 127–152 (LFVGMILILIFAEVLGLYGLIVAIYL). Over 153-156 (YTKQ) the chain is Lumenal.

The protein belongs to the V-ATPase proteolipid subunit family. In terms of assembly, V-ATPase is a heteromultimeric enzyme made up of two complexes: the ATP-hydrolytic V1 complex and the proton translocation V0 complex. The V1 complex consists of three catalytic AB heterodimers that form a heterohexamer, three peripheral stalks each consisting of EG heterodimers, one central rotor including subunits D and F, and the regulatory subunits C and H. The proton translocation complex V0 consists of the proton transport subunit a, a ring of proteolipid subunits c9c'', rotary subunit d, subunits e and f, and the accessory subunits VhaAC45 and ATP6AP2.

The protein resides in the membrane. Proton-conducting pore forming subunit of the V0 complex of vacuolar(H+)-ATPase (V-ATPase), a multisubunit enzyme composed of a peripheral complex (V1) that hydrolyzes ATP and a membrane integral complex (V0) that translocates protons. V-ATPase is responsible for acidifying and maintaining the pH of intracellular compartments and in some cell types, is targeted to the plasma membrane, where it is responsible for acidifying the extracellular environment. The polypeptide is V-type proton ATPase 16 kDa proteolipid subunit c (VHA16) (Heliothis virescens (Tobacco budworm moth)).